Here is an 86-residue protein sequence, read N- to C-terminus: Photosystem I reaction center subunit PsaK 1 (86 aa).

Transmembrane regions (helical) follow at residues 14–34 (LSWS…AIAF) and 61–81 (AVLG…LGLA).

The protein belongs to the PsaG/PsaK family.

The protein localises to the cellular thylakoid membrane. The sequence is that of Photosystem I reaction center subunit PsaK 1 (psaK1) from Synechocystis sp. (strain ATCC 27184 / PCC 6803 / Kazusa).